Here is a 234-residue protein sequence, read N- to C-terminus: Purine nucleoside phosphorylase DeoD-type (234 aa).

His-4 provides a ligand contact to a purine D-ribonucleoside. Residues Gly-20, Arg-24, Arg-43, and 87–90 (RIGS) contribute to the phosphate site. A purine D-ribonucleoside-binding positions include 179–181 (DME) and 203–204 (SD). The Proton donor role is filled by Asp-204.

The protein belongs to the PNP/UDP phosphorylase family. In terms of assembly, homohexamer; trimer of homodimers.

The enzyme catalyses a purine D-ribonucleoside + phosphate = a purine nucleobase + alpha-D-ribose 1-phosphate. It catalyses the reaction a purine 2'-deoxy-D-ribonucleoside + phosphate = a purine nucleobase + 2-deoxy-alpha-D-ribose 1-phosphate. In terms of biological role, catalyzes the reversible phosphorolytic breakdown of the N-glycosidic bond in the beta-(deoxy)ribonucleoside molecules, with the formation of the corresponding free purine bases and pentose-1-phosphate. This is Purine nucleoside phosphorylase DeoD-type from Shewanella oneidensis (strain ATCC 700550 / JCM 31522 / CIP 106686 / LMG 19005 / NCIMB 14063 / MR-1).